Reading from the N-terminus, the 189-residue chain is ECF RNA polymerase sigma-E factor (189 aa).

Residues 1 to 153 (MAEQLTDQAL…TAITLRELEG (153 aa)) form a binds RNAP core region. Residues 25 to 92 (LVSRYQNKVA…KNYLTAQGRR (68 aa)) form a sigma-70 factor domain-2 region. The Polymerase core binding signature appears at 48-61 (DVVQESFIKAYRSI). The interval 129 to 180 (RIVFDTIHNLPEDLKTAITLRELEGLSYEDIAEIMDCPVGTVRSRIFRAREM) is sigma-70 factor domain-4. Residues 156-175 (YEDIAEIMDCPVGTVRSRIF) constitute a DNA-binding region (H-T-H motif).

The protein belongs to the sigma-70 factor family. ECF subfamily. In terms of assembly, interacts transiently with the RNAP catalytic core formed by RpoA, RpoB, RpoC and RpoZ (2 alpha, 1 beta, 1 beta' and 1 omega subunit) to form the RNAP holoenzyme that can initiate transcription. Interacts 1:1 with anti-sigma-E factor RseA which prevents binding to RNAP catalytic core.

It is found in the cytoplasm. ECF sigma-E is held in an inactive form by its cognate anti-sigma factor (RseA) until released by regulated intramembrane proteolysis (RIP). RIP occurs when an extracytoplasmic signal (periplasmic stress and excess LPS) triggers a concerted proteolytic cascade to transmit information and elicit cellular responses. The anti-sigma factor RseA is an inner membrane protein, binding sigma-E in the cytoplasm and RseB in the periplasm. RseA is first cut extracytoplasmically (site-1 protease, S1P, by DegS), then within the membrane itself (site-2 protease, S2P, by RseP), while cytoplasmic proteases (predominantly ClpX-ClpP) finish degrading the regulatory protein, liberating sigma-E. Degradation of RseA requires 2 signals to activate DegS; an outer membrane protein (OMP) signal activates DegS, while an LPS signal causes release of RseB from RseA, freeing RseA to be cleaved. Functionally, sigma factors are initiation factors that promote the attachment of RNA polymerase (RNAP) to specific initiation sites and are then released. Extracytoplasmic function (ECF) sigma-E controls the envelope stress response, responding to periplasmic protein stress, increased levels of periplasmic lipopolysaccharide (LPS) as well as heat shock and oxidative stress; it controls protein processing in the extracytoplasmic compartment. This chain is ECF RNA polymerase sigma-E factor (rpoE), found in Haemophilus influenzae (strain ATCC 51907 / DSM 11121 / KW20 / Rd).